The primary structure comprises 283 residues: Bifunctional protein FolD (283 aa).

NADP(+)-binding positions include 165-167, S190, and V231; that span reads GRS.

It belongs to the tetrahydrofolate dehydrogenase/cyclohydrolase family. In terms of assembly, homodimer.

The catalysed reaction is (6R)-5,10-methylene-5,6,7,8-tetrahydrofolate + NADP(+) = (6R)-5,10-methenyltetrahydrofolate + NADPH. It carries out the reaction (6R)-5,10-methenyltetrahydrofolate + H2O = (6R)-10-formyltetrahydrofolate + H(+). Its pathway is one-carbon metabolism; tetrahydrofolate interconversion. Its function is as follows. Catalyzes the oxidation of 5,10-methylenetetrahydrofolate to 5,10-methenyltetrahydrofolate and then the hydrolysis of 5,10-methenyltetrahydrofolate to 10-formyltetrahydrofolate. This chain is Bifunctional protein FolD, found in Anoxybacillus flavithermus (strain DSM 21510 / WK1).